Here is a 459-residue protein sequence, read N- to C-terminus: D(1)-like dopamine receptor (459 aa).

Residues 1–23 lie on the Extracellular side of the membrane; it reads MAQNFSTVGDGKQMLLERDSSKR. N-linked (GlcNAc...) asparagine glycosylation occurs at asparagine 4. The chain crosses the membrane as a helical span at residues 24–49; that stretch reads VLTGCFLSLLIFTTLLGNTLVCVAVT. Topologically, residues 50 to 60 are cytoplasmic; sequence KFRHLRSKVTN. A helical membrane pass occupies residues 61-87; it reads FFVISLAISDLLVAILVMPWKAATEIM. At 88–96 the chain is on the extracellular side; that stretch reads GFWPFGEFC. Residues cysteine 96 and cysteine 187 are joined by a disulfide bond. A helical transmembrane segment spans residues 97-119; sequence NIWVAFDIMCSTASILNLCVISV. The Cytoplasmic portion of the chain corresponds to 120-138; that stretch reads DRYWAISSPFRYERKMTPK. Residues 139-164 form a helical membrane-spanning segment; the sequence is VACLMISVAWTLSVLISFIPVQLNWH. Residues 165-191 are Extracellular-facing; sequence KAQTASYVELNGTYAGDLPPDNCDSSL. A helical membrane pass occupies residues 192-216; sequence NRTYAISSSLISFYIPVAIMIVTYT. At 217-269 the chain is on the cytoplasmic side; the sequence is RIYRIAQKQIRRISALERAAESAQNRHSSMGNSLSMESECSFKMSFKRETKVL. Residues 270-297 traverse the membrane as a helical segment; the sequence is KTLSVIMGVFVCCWLPFFILNCMVPFCE. Over 298–311 the chain is Extracellular; it reads ADDTTDFPCISSTT. A helical membrane pass occupies residues 312–333; that stretch reads FDVFVWFGWANSSLNPIIYAFN. The Cytoplasmic segment spans residues 334–459; sequence ADFRKAFSIL…QNGQHKSMSC (126 aa).

It belongs to the G-protein coupled receptor 1 family.

Its subcellular location is the cell membrane. The protein resides in the cell projection. It localises to the cilium membrane. In terms of biological role, receptor for dopamine. This Takifugu rubripes (Japanese pufferfish) protein is D(1)-like dopamine receptor (d14).